A 285-amino-acid chain; its full sequence is CCR4-NOT transcription complex subunit 7 (285 aa).

A divalent metal cation contacts are provided by Asp40, Glu42, Asp161, Asp230, and Glu278.

The protein belongs to the CAF1 family. As to quaternary structure, component of the CCR4-NOT complex. Mn(2+) is required as a cofactor. The cofactor is Mg(2+). Co(2+) serves as cofactor.

Its subcellular location is the nucleus. The protein resides in the cytoplasm. It catalyses the reaction Exonucleolytic cleavage of poly(A) to 5'-AMP.. In terms of biological role, has 3'-5' poly(A) exoribonuclease activity for synthetic poly(A) RNA substrate. Catalytic component of the CCR4-NOT complex which is one of the major cellular mRNA deadenylases and is linked to various cellular processes including bulk mRNA degradation, miRNA-mediated repression, translational repression during translational initiation and general transcription regulation. During miRNA-mediated repression the complex also seems to act as translational repressor during translational initiation. Additional complex functions may be a consequence of its influence on mRNA expression. This is CCR4-NOT transcription complex subunit 7 (CNOT7) from Gallus gallus (Chicken).